Here is a 110-residue protein sequence, read N- to C-terminus: Large ribosomal subunit protein uL22 (110 aa).

It belongs to the universal ribosomal protein uL22 family. In terms of assembly, part of the 50S ribosomal subunit.

This protein binds specifically to 23S rRNA; its binding is stimulated by other ribosomal proteins, e.g. L4, L17, and L20. It is important during the early stages of 50S assembly. It makes multiple contacts with different domains of the 23S rRNA in the assembled 50S subunit and ribosome. In terms of biological role, the globular domain of the protein is located near the polypeptide exit tunnel on the outside of the subunit, while an extended beta-hairpin is found that lines the wall of the exit tunnel in the center of the 70S ribosome. This is Large ribosomal subunit protein uL22 from Glaesserella parasuis serovar 5 (strain SH0165) (Haemophilus parasuis).